Here is a 158-residue protein sequence, read N- to C-terminus: UPF0262 protein Rsph17025_0594 (158 aa).

The protein belongs to the UPF0262 family.

The protein is UPF0262 protein Rsph17025_0594 of Cereibacter sphaeroides (strain ATCC 17025 / ATH 2.4.3) (Rhodobacter sphaeroides).